The chain runs to 96 residues: Prokineticin Bm8-d (96 aa).

An N-terminal signal peptide occupies residues 1–19 (MKCFAQIVVLLLVIAFSHG). Intrachain disulfides connect C26–C38, C32–C50, C37–C78, C60–C86, and C80–C95.

Belongs to the AVIT (prokineticin) family. Expressed by the skin glands.

It localises to the secreted. Functionally, potent agonist for both PKR1/PROKR1 and PKR2/PROKR2, and inducer of a potent and long-lasting hyperalgesia. Also potentiates capsaicin-induced TRPV1 current, when tested on DRG neurons. At subnanomolar concentrations, this protein both induces potent chemotaxis of macrophages and stimulates LPS-induced production of the pro-inflammatory cytokines IL-1 and IL-12. In vivo, potently stimulates the contraction of the guinea-pig gastrointestinal (GI) smooth muscle (nanomolar concentration). The sequence is that of Prokineticin Bm8-d from Bombina maxima (Giant fire-bellied toad).